We begin with the raw amino-acid sequence, 582 residues long: External alternative NAD(P)H-ubiquinone oxidoreductase B4, mitochondrial (582 aa).

The N-terminal 39 residues, 1-39, are a transit peptide targeting the mitochondrion; it reads MSFHSFYQRASSLFKAYPSTSKILLLSTFSGGGGVLVYS. 65-95 provides a ligand contact to FAD; sequence KVVVLGSGWSGYSFLSYLNNPNYDVQVVSPR. 227–263 serves as a coordination point for NAD(+); sequence LHFVVVGGGPTGVEFSAELHDFLVQDVAKIYPKVQEF. The EF-hand domain maps to 384-419; it reads RVMEDIAAIFNKADKGNTGTLKKKDFNSVVKDICQR. Residues D397, T401, T403, and D408 each contribute to the Ca(2+) site. Residues 573-582 carry the Microbody targeting signal motif; it reads FVFGRDSSSI.

It belongs to the NADH dehydrogenase family. FAD serves as cofactor. As to expression, expressed in seedlings, roots, cotyledons, stems, buds and flowers and, to a lower extent, in stems and leaves.

The protein localises to the mitochondrion inner membrane. It is found in the peroxisome. It catalyses the reaction a quinone + NADH + H(+) = a quinol + NAD(+). It carries out the reaction a ubiquinone + NADH + H(+) = a ubiquinol + NAD(+). Its activity is regulated as follows. No effect of calcium ions on activity. Its function is as follows. Alternative NADH-ubiquinone oxidoreductase which catalyzes the oxidation of mitochondrial NADH does not translocate protons across the inner mitochondrial membrane. NAD(P)H dehydrogenase; more efficient on NADH. This is External alternative NAD(P)H-ubiquinone oxidoreductase B4, mitochondrial (NDB4) from Arabidopsis thaliana (Mouse-ear cress).